Consider the following 131-residue polypeptide: Arsenate reductase 2 (131 aa).

Residues Cys-10, Cys-82, and Cys-89 each act as nucleophile in the active site. 2 cysteine pairs are disulfide-bonded: Cys-10/Cys-82 and Cys-82/Cys-89.

This sequence belongs to the low molecular weight phosphotyrosine protein phosphatase family. Thioredoxin-coupled ArsC subfamily.

The protein localises to the cytoplasm. The enzyme catalyses arsenate + [thioredoxin]-dithiol + H(+) = arsenite + [thioredoxin]-disulfide + H2O. Catalyzes the reduction of arsenate [As(V)] to arsenite [As(III)]. The chain is Arsenate reductase 2 from Staphylococcus haemolyticus (strain JCSC1435).